Consider the following 338-residue polypeptide: Eukaryotic translation initiation factor 3 subunit H (338 aa).

One can recognise an MPN domain in the interval 22–154; sequence VQCDGLAVMK…LKAYRLTPQA (133 aa).

It belongs to the eIF-3 subunit H family. As to quaternary structure, component of the eukaryotic translation initiation factor 3 (eIF-3) complex. The eIF-3 complex interacts with pix. Interacts with mxt.

The protein resides in the cytoplasm. Component of the eukaryotic translation initiation factor 3 (eIF-3) complex, which is involved in protein synthesis of a specialized repertoire of mRNAs and, together with other initiation factors, stimulates binding of mRNA and methionyl-tRNAi to the 40S ribosome. The eIF-3 complex specifically targets and initiates translation of a subset of mRNAs involved in cell proliferation. This is Eukaryotic translation initiation factor 3 subunit H from Drosophila erecta (Fruit fly).